The following is a 471-amino-acid chain: MGQVLPVFAHCKEAPSTASSTPDSTEGGNDDSDFRELHTAREFSEDEEEETTSQDWGTPRELTFSYIAFDGVVGSGGRRDSVVRRPRPQGRSVSEPRDPPQQSGLGDSLESIPSLSQSPEPGRRGDPDPVPPAERPLEELRLRLDQLGWVVRSAGSGEDSATSSSTPLENEEPDGLEASEAGEETNLELRLAQSLHLQLEVLTPQLSPSSGTPQAHTPSPQRSQDSNSGPDDEPLLNVVEEHWRLLEQEPITAQCLDSTDQSEFMLEPLLLVADLLYWKDTRTSGAVFTGLMASLLCLLHFSIVSVAAHLALLGLCATISLRVYRKVLQAVHRGDGTNPFQAYLDMDLTLTREQTERLSQQIASHVVSTATQLRHFFLVEDLVDSLKLALLFYILTFVGAIFNGLTLVILGVVALFTVPLLYRQHQAQIDQYVGLVTNQLSHIKAKIRAKIPGTGTLAPTASVSGSKAKAE.

Disordered stretches follow at residues 1–137 (MGQV…ERPL), 153–181 (SAGSGEDSATSSSTPLENEEPDGLEASEA), and 205–234 (QLSPSSGTPQAHTPSPQRSQDSNSGPDDEP). A compositionally biased stretch (low complexity) spans 14 to 25 (APSTASSTPDST). Residues 32–43 (SDFRELHTAREF) are compositionally biased toward basic and acidic residues. At S44 the chain carries Phosphoserine. Polar residues-rich tracts occupy residues 100-118 (PQQSGLGDSLESIPSLSQS) and 159-168 (DSATSSSTPL). Residues 169-181 (ENEEPDGLEASEA) show a composition bias toward acidic residues. The span at 205 to 229 (QLSPSSGTPQAHTPSPQRSQDSNSG) shows a compositional bias: polar residues. 2 positions are modified to phosphoserine: S226 and S228. One can recognise a Reticulon domain in the interval 272–471 (VADLLYWKDT…SVSGSKAKAE (200 aa)). 2 consecutive transmembrane segments (helical) span residues 295–315 (LLCLLHFSIVSVAAHLALLGL) and 390–410 (LLFYILTFVGAIFNGLTLVIL).

As to quaternary structure, interacts with SPAST. Interacts with BACE1. Interacts (via first transmembrane domain) with ARL6IP5/GTRAP3-18. Interacts (via N-terminus) with SLC1A1/EAAC1; the interaction promotes cell surface expression of SLC1A1. In terms of tissue distribution, detected in skeletal and cardiac muscle (at protein level). Expressed predominantly in neural and muscular tissues.

It is found in the endoplasmic reticulum membrane. It localises to the sarcoplasmic reticulum membrane. Its subcellular location is the cell membrane. The protein resides in the sarcolemma. The protein localises to the T-tubule. It is found in the cytoplasm. It localises to the myofibril. Its subcellular location is the sarcomere. The protein resides in the z line. The protein localises to the cytoskeleton. In terms of biological role, inhibits amyloid precursor protein processing, probably by blocking BACE1 activity. Enhances trafficking of the glutamate transporter SLC1A1/EAAC1 from the endoplasmic reticulum to the cell surface. Plays a role in the translocation of SLC2A4/GLUT4 from intracellular membranes to the cell membrane which facilitates the uptake of glucose into the cell. This chain is Reticulon-2, found in Mus musculus (Mouse).